A 214-amino-acid polypeptide reads, in one-letter code: Attacin (214 aa).

Positions 1–19 (MSKSVALLLLCACLASGRH) are cleaved as a signal peptide. The propeptide occupies 20–26 (VPTRARR).

Belongs to the attacin/sarcotoxin-2 family. As to expression, highest expression in fat body and hemocytes and to a much lesser extent in Malpighian tubules, silk gland and midgut.

The protein resides in the secreted. Functionally, hemolymph antibacterial protein. Has a wide spectrum of activity against both Gram-positive and Gram-negative bacteria. This is Attacin from Bombyx mori (Silk moth).